The primary structure comprises 84 residues: Large ribosomal subunit protein bL27 (84 aa).

The segment at Met1–Leu21 is disordered.

Belongs to the bacterial ribosomal protein bL27 family.

In Chlorobium phaeovibrioides (strain DSM 265 / 1930) (Prosthecochloris vibrioformis (strain DSM 265)), this protein is Large ribosomal subunit protein bL27.